We begin with the raw amino-acid sequence, 751 residues long: Catalase-peroxidase 2 (751 aa).

Positions Met-1–Ala-27 are cleaved as a signal peptide. Positions Trp-115–Tyr-238 form a cross-link, tryptophyl-tyrosyl-methioninium (Trp-Tyr) (with M-264). The active-site Proton acceptor is the His-116. A cross-link (tryptophyl-tyrosyl-methioninium (Tyr-Met) (with W-115)) is located at residues Tyr-238–Met-264. Position 279 (His-279) interacts with heme b.

The protein belongs to the peroxidase family. Peroxidase/catalase subfamily. In terms of assembly, homodimer or homotetramer. Requires heme b as cofactor. Post-translationally, formation of the three residue Trp-Tyr-Met cross-link is important for the catalase, but not the peroxidase activity of the enzyme.

The catalysed reaction is H2O2 + AH2 = A + 2 H2O. It carries out the reaction 2 H2O2 = O2 + 2 H2O. Bifunctional enzyme with both catalase and broad-spectrum peroxidase activity. The protein is Catalase-peroxidase 2 of Idiomarina loihiensis (strain ATCC BAA-735 / DSM 15497 / L2-TR).